A 463-amino-acid polypeptide reads, in one-letter code: Putative WAS protein family homolog 3 (463 aa).

The segment at 1 to 54 is required for WASH complex assembly; that stretch reads MTPVRMQHSLAGQTYAVPLIQPDLRREEAVQQMADALQYLQKVSGDIFSRISQQ. The tract at residues 1–165 is WHD1; the sequence is MTPVRMQHSL…EGLGGLPSNI (165 aa). Residue K218 forms a Glycyl lysine isopeptide (Lys-Gly) (interchain with G-Cter in ubiquitin) linkage. The interval 295-463 is disordered; the sequence is QDGVLTPPPP…AEEDEDDWES (169 aa). A compositionally biased stretch (pro residues) spans 300–312; the sequence is TPPPPPPPPPPAP. A VCA region spans residues 347–463; sequence QGAPREVVDP…AEEDEDDWES (117 aa). The WH2 domain occupies 359–381; sequence GRATLLESIRQAGGIGKAKLRSM. Over residues 380-396 the composition is skewed to basic and acidic residues; it reads SMKERKLEKKQQKEQEQ. Over residues 422 to 434 the composition is skewed to gly residues; it reads SGKGPGAGEGPGG. The span at 454 to 463 shows a compositional bias: acidic residues; the sequence is AEEDEDDWES.

Belongs to the WASH1 family. Component of the WASH core complex also described as WASH regulatory complex (SHRC) composed of WASH (WASHC1, WASH2P or WASH3P), WASHC2 (WASHC2A or WASHC2C), WASHC3, WASHC4 and WASHC5. The WASH core complex associates with the F-actin-capping protein dimer (formed by CAPZA1, CAPZA2 or CAPZA3 and CAPZB) in a transient or substoichiometric manner which was initially described as WASH complex. Interacts (via WHD1 region) with WASHC2C; the interaction is direct. Interacts with alpha-tubulin. Interacts with BECN1; WASHC1 and AMBRA1 can competitively interact with BECN1. Interacts with BLOC1S2; may associate with the BLOC-1 complex. Interacts with tubulin gamma chain (TUBG1 or TUBG2). Interacts with EXOC1, EXOC4, EXOC8; in MMP14-positive endosomes in breast tumor cells; indicative for an association with the exocyst complex.

The protein localises to the early endosome. Its subcellular location is the early endosome membrane. It localises to the recycling endosome membrane. The protein resides in the cell projection. It is found in the lamellipodium. The protein localises to the filopodium. Its subcellular location is the cytoplasmic vesicle. It localises to the autophagosome. The protein resides in the cytoplasm. It is found in the cytoskeleton. The protein localises to the microtubule organizing center. Its subcellular location is the centrosome. It localises to the centriole. Its function is as follows. Acts as a nucleation-promoting factor at the surface of endosomes, where it recruits and activates the Arp2/3 complex to induce actin polymerization, playing a key role in the fission of tubules that serve as transport intermediates during endosome sorting. Involved in endocytic trafficking of EGF. Involved in transferrin receptor recycling. Regulates the trafficking of endosomal alpha5beta1 integrin to the plasma membrane and involved in invasive cell migration. In T-cells involved in endosome-to-membrane recycling of receptors including T-cell receptor (TCR), CD28 and ITGAL; proposed to be implicated in T cell proliferation and effector function. In dendritic cells involved in endosome-to-membrane recycling of major histocompatibility complex (MHC) class II probably involving retromer and subsequently allowing antigen sampling, loading and presentation during T-cell activation. Involved in Arp2/3 complex-dependent actin assembly driving Salmonella typhimurium invasion independent of ruffling. Involved in the exocytosis of MMP14 leading to matrix remodeling during invasive migration and implicating late endosome-to-plasma membrane tubular connections and cooperation with the exocyst complex. Involved in negative regulation of autophagy independently from its role in endosomal sorting by inhibiting BECN1 ubiquitination to inactivate PIK3C3/Vps34 activity. This chain is Putative WAS protein family homolog 3 (WASH3P), found in Homo sapiens (Human).